A 323-amino-acid polypeptide reads, in one-letter code: Digestive cysteine proteinase 2 (323 aa).

The first 16 residues, 1–16 (MKVAVLFLCGVALAAA), serve as a signal peptide directing secretion. The propeptide at 17–107 (SPSWEHFKGK…FYPKKETGPQ (91 aa)) is activation peptide. 3 disulfide bridges follow: Cys128-Cys171, Cys162-Cys204, and Cys263-Cys312. Residue Cys131 is part of the active site. Active-site residues include His270 and Asn290.

It belongs to the peptidase C1 family.

Inhibited by E-64, antipain, leupeptin, heavy metal ions, iodoacetic acid, dithionitrobenzene, p-hydroxymercuri-benzoate; activated by mercaptoethanol and dithiothreitol. This is Digestive cysteine proteinase 2 (LCP2) from Homarus americanus (American lobster).